The sequence spans 378 residues: C-X-C chemokine receptor type 3-2 (378 aa).

The Extracellular portion of the chain corresponds to Met-1–Pro-47. N-linked (GlcNAc...) asparagine glycans are attached at residues Asn-3 and Asn-19. The helical transmembrane segment at Val-48–Ile-68 threads the bilayer. Residues Arg-69–Thr-86 lie on the Cytoplasmic side of the membrane. Residues Phe-87–Val-107 form a helical membrane-spanning segment. Topologically, residues Glu-108–Lys-121 are extracellular. Cys-120 and Cys-199 are oxidised to a cystine. A helical membrane pass occupies residues Ile-122–Ser-142. The Cytoplasmic segment spans residues Phe-143 to Ala-164. A helical membrane pass occupies residues Gln-165–Phe-185. At Arg-186–Gln-212 the chain is on the extracellular side. A helical transmembrane segment spans residues Ile-213–Tyr-233. The Cytoplasmic portion of the chain corresponds to Cys-234–Ser-253. The helical transmembrane segment at Leu-254 to Leu-274 threads the bilayer. The Extracellular segment spans residues Arg-275–Glu-304. Residues Ser-305–Phe-325 form a helical membrane-spanning segment. At Arg-326–Ala-378 the chain is on the cytoplasmic side.

It belongs to the G-protein coupled receptor 1 family.

It localises to the cell membrane. Receptor for the C-X-C chemokines cxcl11.1 and cxcl11.6. Promotes macrophage chemotaxis to sites of bacterial infection. The protein is C-X-C chemokine receptor type 3-2 of Danio rerio (Zebrafish).